We begin with the raw amino-acid sequence, 320 residues long: Aspartate carbamoyltransferase catalytic subunit (320 aa).

Carbamoyl phosphate is bound by residues arginine 58 and threonine 59. Lysine 86 provides a ligand contact to L-aspartate. Arginine 108, histidine 136, and glutamine 139 together coordinate carbamoyl phosphate. Residues arginine 169 and arginine 223 each coordinate L-aspartate. Carbamoyl phosphate-binding residues include glycine 264 and proline 265.

It belongs to the aspartate/ornithine carbamoyltransferase superfamily. ATCase family. As to quaternary structure, heterododecamer (2C3:3R2) of six catalytic PyrB chains organized as two trimers (C3), and six regulatory PyrI chains organized as three dimers (R2).

The catalysed reaction is carbamoyl phosphate + L-aspartate = N-carbamoyl-L-aspartate + phosphate + H(+). It functions in the pathway pyrimidine metabolism; UMP biosynthesis via de novo pathway; (S)-dihydroorotate from bicarbonate: step 2/3. Catalyzes the condensation of carbamoyl phosphate and aspartate to form carbamoyl aspartate and inorganic phosphate, the committed step in the de novo pyrimidine nucleotide biosynthesis pathway. This is Aspartate carbamoyltransferase catalytic subunit from Cereibacter sphaeroides (strain ATCC 17025 / ATH 2.4.3) (Rhodobacter sphaeroides).